The chain runs to 449 residues: 5'-deoxyadenosine deaminase (449 aa).

Residues H79 and H81 each coordinate Zn(2+). Positions 108 and 200 each coordinate substrate. H227 serves as a coordination point for Zn(2+). Substrate-binding residues include E230 and D316. Residue D316 participates in Zn(2+) binding.

This sequence belongs to the metallo-dependent hydrolases superfamily. MTA/SAH deaminase family. Homotetramer. It depends on Zn(2+) as a cofactor.

It carries out the reaction 5'-deoxyadenosine + H2O + H(+) = 5'-deoxyinosine + NH4(+). The catalysed reaction is S-adenosyl-L-homocysteine + H2O + H(+) = S-inosyl-L-homocysteine + NH4(+). It catalyses the reaction S-methyl-5'-thioadenosine + H2O + H(+) = S-methyl-5'-thioinosine + NH4(+). The enzyme catalyses adenosine + H2O + H(+) = inosine + NH4(+). Its pathway is amino-acid biosynthesis; S-adenosyl-L-methionine biosynthesis. Functionally, catalyzes the deamination of three SAM-derived enzymatic products, namely 5'-deoxyadenosine, S-adenosyl-L-homocysteine, and 5'-methylthioadenosine, to produce the inosine analogs. Can also deaminate adenosine. The preferred substrate for this enzyme is 5'-deoxyadenosine, but all these substrates are efficiently deaminated. Likely functions in a S-adenosyl-L-methionine (SAM) recycling pathway from S-adenosyl-L-homocysteine (SAH) produced from SAM-dependent methylation reactions. May also be involved in the recycling of 5'-deoxyadenosine, whereupon the 5'-deoxyribose moiety of 5'-deoxyinosine is further metabolized to deoxyhexoses used for the biosynthesis of aromatic amino acids in methanogens. In Methanospirillum hungatei JF-1 (strain ATCC 27890 / DSM 864 / NBRC 100397 / JF-1), this protein is 5'-deoxyadenosine deaminase.